The primary structure comprises 324 residues: Lactonase drp35 (324 aa).

The Ca(2+) site is built by Glu-47, Ser-109, Gly-111, Asp-129, Thr-132, Tyr-134, Asp-137, Asn-184, Asp-235, and Ser-236. Residue Asp-235 is the Proton donor of the active site.

It belongs to the SMP-30/CGR1 family. Ca(2+) serves as cofactor.

It localises to the cytoplasm. In terms of biological role, exhibits lactonase activity. Acts in cells with perturbed membrane integrity and is possibly related to the membrane homeostasis. The protein is Lactonase drp35 (drp35) of Staphylococcus aureus (strain MRSA252).